The sequence spans 2925 residues: MGVLASALCWLLCVWLPWGEQAAESLRVQRLGERVVDSGRSGARGMRNVKGMRNGPAQTRVSSSSSHQEATLAMGDKATVVGGQQAEAPDSVAMSSWERRLHRAKCAPSYLFSCFNGGECVHPAFCDCRRFNATGPRCQMVYNAGPERDSICRAWGQHHVETFDGLYYYLSGKGSYTLVGRHEPEGQSFSIQVHNDPQCGSSPYTCSRAVSLFFVGEQEIHLAKEVTHGGMRVQLPHVMGSARLQQLAGYVIVRHQSAFTLAWDGASAVYIKMSPELLGWTHGLCGNNNADPKDDLVTSSGKLTDDVVEFVHSWQEQAPNQPPGPTTSSLPRPPCLQQNPGTMQGVYEQCEALLRPPFDACHAYVSPLPFTASCTSDLCQSMGDVATWCRALAEYARACAQAGRPLQGWRTQLRQCTVHCKEKAFTYNECIACCPASCHPRASCVDSEIACVDGCYCPNGLIFEDGGCVAPAECPCEFHGTLYPPGSVVKEDCNTCTCTSGKWECSTAVCPAECSVTGDIHFTTFDGRRYTFPATCQYILAKSRSSGTFTVTLQNAPCGLNQDGACVQSVSVILHQDPRRQVTLTQAGDVLLFDQYKIIPPYTDDAFEIRRLSSVFLRVRTNVGVRVLYDREGLRLYLQVDQRWVEDTVGLCGTFNGNTQDDFLSPVGVPESTPQLFGNSWKTLSACSPLVSGSPLDPCDVHLQAASYSVQACSVLTGEMFAPCSAFLSPVPYFEQCRRDACRCGQPCLCATLAHYAHLCRRHGLPVDFRARLPACALSCEASKEYSPCVAPCGRTCQDLASPEACGVDGGDDLSRDECVEGCACPPDTYLDTQADLCVPRNQCSCHFQGVDYPPGDSDIPSLGHCHCKDGVMSCDSRAPAAACPAGQVFVNCSDLHTDLELSRERTCEQQLLNLSVSARGPCLSGCACPQGLLRHGDACFLPEECPCTWKGKEYFPGDQVMSPCHTCVCQRGSFQCTLHPCASTCTAYGDRHYRTFDGLPFDFVGACKVHLVKSTSDVSFSVIVENVNCYSSGMICRKFISINVGNSLIVFDDDSGNPSPESFLDDKQEVHTWRVGFFTLVHFPQEHITLLWDQRTTVHVQAGPQWQGQLAGLCGNFDLKTINEMRTPENLELTNPQEFGSSWAAVECPDTLDPRDMCVLNPLREPFAKKECSILLSEVFEICHPVVDVTWFYSNCLTDTCGCSQGGDCECFCASVSAYAHQCCQHGVAVDWRTPRLCPYDCDFFNKVLGKGPYQLSSLAAGGALVGMKAVGDDIVLVRTEDVAPADIVSFLLTAALYKAKAHDPDVVSLEAADRPNFFLHVTANGSLELAKWQGRDTFQQHASFLLHRGTRQAGLVALESLAKPSSFLYVSGAVLALRLYEHTEVFRRGTLFRLLDAKPSGAAYPICEWRYDACASPCFQTCRDPRAASCRDVPRVEGCVPVCPTPQVLDEVTQRCVYLEDCVEPAVWVPTEALGNETLPPSQGLPTPSDEEPQLSQESPRTPTHRPALTPAAPLTTALNPPVTATEEPVVSPGPTQTTLQQPLELTASQLPAGPTESPASKGVTASLLAIPHTPESSSLPVALQTPTPGMVSGAMETTRVTVIFAGSPNITVSSRSPPAPRFPLMTKAVTVRGHGSLPVRTTPPQPSLTASPSSRPVASPGAISRSPTSSGSHKAVLTPAVTKVISRTGVPQPTQAQSASSPSTPLTVAGTAAEQVPVSPLATRSLEIVLSTEKGEAGHSQPMGSPASPQPHPLPSAPPRPAQHTTMATRSPALPPETPAAASLSTATDGLAATPFMSLESTRPSQLLSGLPPDTSLPLAKVGTSAPVATPGPKASVITTPLQPQATTLPAQTLSPVLPFTPAAMTQAHPPTHIAPPAAGTAPGLLLGATLPTSGVLPVAEGTASMVSVVPRKSTTGKVAILSKQVSLPTSMYGSAEGGPTELTPATSHPLTPLVAEPEGAQAGTALPVPTSYALSRVSARTAPQDSMLVLLPQLAEAHGTSAGPHLAAEPVDEATTEPSGRSAPALSIVEGLAEALATTTEANTSTTCVPIAEQDCVRHICLEGQLIRVNQSQHCPQGAAPPRCGILGLAVRVGGDRCCPLWECACRCSIFPDLSFVTFDGSHVALFKEAIYILSQSPDEMLTVHVLDCKSANLGHLNWPPFCLVMLNMTHLAHQVTIDRFNRKVTVDLQPVWPPVSRYGFRIEDTGHMYMILTPSDIQIQWLHSSGLMIVEASKTSKAQGHGLCGICDGDAANDLTLKDGSVVGGAEDPAPFLDSWQVPSSLTSVGQTRFRPDSCATTDCSPCLRMVSNRTFSACHRFVPPESFCELWIRDTKYVQQPCVALTVYVAMCHKFHVCIEWRRSDYCPFLCSSDSTYQACVTACEPPKTCQDGILGPLDPEHCQVLGEGCVCSEGTILHRRHSALCIPEAKCACTDSMGVPRALGETWNSSLSGCCQHQCQAPDTIVPVDLGCPSPRPESCLRFGEVALLLPTKDPCCLGTVCVCNQTLCEGLAPTCRPGHRLLTHFQEDSCCPSYSCECDPDLCEAELVPSCRQDQILITGRLGDSCCTSYFCACGDCPDSIPECQEGEALTVHRNTTELCCPLYQCVCENFRCPQVQCGLGTALVEVWSPDRCCPYKSCECDCDTIPVPRCHLWEKSQLDEEFMHSVENVCGCAKYECVKAPVCLSRELGVMQPGQTVVELSADGVCHTSRCTTVLDPLTNFYQINTTSVLCDIHCEANQEYEHPRDLAACCGSCRNVSCLFTFPNGTTSLFLPGASWIADCARHHCSSTPLGAVLVRSPISCPPLNETECAKVGGSVVPSLEGCCRTCKEDGRSCKKVTIRMTIRKNECRSSTPVNLVSCDGRCPSASIYNYNINTYARFCKCCREVGLQRRSVQLFCATNATWVPYTVQEPTDCACQWS.

The N-terminal stretch at 1 to 25 is a signal peptide; sequence MGVLASALCWLLCVWLPWGEQAAES. Residues 39–69 are disordered; sequence GRSGARGMRNVKGMRNGPAQTRVSSSSSHQE. Positions 56–69 are enriched in polar residues; that stretch reads PAQTRVSSSSSHQE. In terms of domain architecture, EGF-like spans 102-139; sequence HRAKCAPSYLFSCFNGGECVHPAFCDCRRFNATGPRCQ. 5 cysteine pairs are disulfide-bonded: C106–C120, C114–C126, C128–C138, C152–C285, and C199–C206. One can recognise a VWFD 1 domain in the interval 150 to 322; the sequence is SICRAWGQHH…SWQEQAPNQP (173 aa). Residues 316-335 are disordered; that stretch reads EQAPNQPPGPTTSSLPRPPC. A compositionally biased stretch (polar residues) spans 326–335; that stretch reads TTSSLPRPPC. The 177-residue stretch at 512-688 folds into the VWFD 2 domain; sequence AECSVTGDIH…NSWKTLSACS (177 aa). 3 cysteine pairs are disulfide-bonded: C514-C652, C536-C687, and C558-C566. A TIL domain is found at 780–844; that stretch reads CEASKEYSPC…ADLCVPRNQC (65 aa). N914 carries an N-linked (GlcNAc...) asparagine glycan. The VWFD 3 domain occupies 984 to 1152; sequence STCTAYGDRH…SWAAVECPDT (169 aa). Cystine bridges form between C986-C1115 and C1030-C1037. The segment at 1476–1540 is disordered; that stretch reads LGNETLPPSQ…PVVSPGPTQT (65 aa). N1478 carries N-linked (GlcNAc...) asparagine glycosylation. Residues 1502 to 1528 show a composition bias toward low complexity; that stretch reads PRTPTHRPALTPAAPLTTALNPPVTAT. An N-linked (GlcNAc...) asparagine glycan is attached at N1612. Disordered stretches follow at residues 1636–1679, 1693–1715, and 1737–1788; these read GHGS…HKAV, VPQPTQAQSASSPSTPLTVAGTA, and KGEA…ASLS. Residues 1650–1659 show a composition bias toward polar residues; the sequence is SLTASPSSRP. Positions 1694–1708 are enriched in low complexity; it reads PQPTQAQSASSPSTP. The span at 1751-1764 shows a compositional bias: pro residues; it reads SPQPHPLPSAPPRP. Residues 2110 to 2289 enclose the VWFD 4 domain; that stretch reads CRCSIFPDLS…SWQVPSSLTS (180 aa). 5 cysteine pairs are disulfide-bonded: C2112–C2249, C2840–C2889, C2854–C2903, C2865–C2920, and C2869–C2922. Residues 2840 to 2925 form the CTCK domain; sequence CKKVTIRMTI…EPTDCACQWS (86 aa).

It belongs to the otogelin family. In terms of processing, N-glycosylated. Not O-glycosylated.

The protein resides in the apical cell membrane. Its subcellular location is the secreted. It is found in the extracellular space. Glycoprotein specific to acellular membranes of the inner ear. May be required for the anchoring of the otoconial membranes and cupulae to the underlying neuroepithelia in the vestibule. May be involved in the organization and/or stabilization of the fibrillar network that compose the tectorial membrane in the cochlea. May play a role in mechanotransduction processes. The polypeptide is Otogelin (OTOG) (Homo sapiens (Human)).